We begin with the raw amino-acid sequence, 1161 residues long: PAN2-PAN3 deadenylation complex catalytic subunit pan2 (1161 aa).

WD repeat units follow at residues glycine 20 to serine 59 and alanine 276 to glutamate 315. Residues methionine 316–aspartate 452 are linker. Positions aspartate 453–lysine 822 constitute a USP domain. Residues valine 871–leucine 1049 form the Exonuclease domain. Residues aspartate 874, glutamate 876, aspartate 983, and aspartate 1042 each coordinate a divalent metal cation. The stretch at asparagine 1009 to glycine 1060 is one WD 4 repeat. The interval arginine 1092 to lysine 1161 is disordered. Polar residues predominate over residues valine 1097–threonine 1110. Over residues alanine 1116–proline 1129 the composition is skewed to low complexity. Gly residues predominate over residues threonine 1145–phenylalanine 1155.

The protein belongs to the peptidase C19 family. PAN2 subfamily. As to quaternary structure, forms a heterotrimer with an asymmetric homodimer of the regulatory subunit pan3 to form the poly(A)-nuclease (PAN) deadenylation complex. A divalent metal cation serves as cofactor.

The protein localises to the cytoplasm. The enzyme catalyses Exonucleolytic cleavage of poly(A) to 5'-AMP.. Its activity is regulated as follows. Positively regulated by the regulatory subunit pan3. Functionally, catalytic subunit of the poly(A)-nuclease (PAN) deadenylation complex, one of two cytoplasmic mRNA deadenylases involved in mRNA turnover. PAN specifically shortens poly(A) tails of RNA and the activity is stimulated by poly(A)-binding protein pab1. PAN deadenylation is followed by rapid degradation of the shortened mRNA tails by the CCR4-NOT complex. Deadenylated mRNAs are then degraded by two alternative mechanisms, namely exosome-mediated 3'-5' exonucleolytic degradation, or deadenylation-dependent mRNA decaping and subsequent 5'-3' exonucleolytic degradation by xrn1. May also be involved in post-transcriptional maturation of mRNA poly(A) tails. This chain is PAN2-PAN3 deadenylation complex catalytic subunit pan2, found in Neosartorya fischeri (strain ATCC 1020 / DSM 3700 / CBS 544.65 / FGSC A1164 / JCM 1740 / NRRL 181 / WB 181) (Aspergillus fischerianus).